The following is a 373-amino-acid chain: Histone-lysine N-methyltransferase SETD7 (373 aa).

Residues 1 to 20 (MDSDDDNMEEVVEGPLDEDD) are disordered. MORN repeat units follow at residues 36–58 (FEGH…DGST), 59–81 (LEGF…DGGA), and 106–128 (FRGR…DGAC). The 123-residue stretch at 214 to 336 (QRVYVGQSLI…KDEELTVAYG (123 aa)) folds into the SET domain. Residues 226–228 (AGE), Asn296, and His297 contribute to the S-adenosyl-L-methionine site.

This sequence belongs to the class V-like SAM-binding methyltransferase superfamily. Histone-lysine methyltransferase family. SET7 subfamily.

It is found in the nucleus. Its subcellular location is the chromosome. The catalysed reaction is L-lysyl(4)-[histone H3] + S-adenosyl-L-methionine = N(6)-methyl-L-lysyl(4)-[histone H3] + S-adenosyl-L-homocysteine + H(+). It catalyses the reaction L-lysyl-[protein] + S-adenosyl-L-methionine = N(6)-methyl-L-lysyl-[protein] + S-adenosyl-L-homocysteine + H(+). Histone methyltransferase that specifically monomethylates 'Lys-4' of histone H3. H3 'Lys-4' methylation represents a specific tag for epigenetic transcriptional activation. Plays a central role in the transcriptional activation of genes. Also has methyltransferase activity toward non-histone proteins. The chain is Histone-lysine N-methyltransferase SETD7 (setd7) from Danio rerio (Zebrafish).